Consider the following 212-residue polypeptide: Large ribosomal subunit protein uL3 (212 aa).

Q153 is modified (N5-methylglutamine).

This sequence belongs to the universal ribosomal protein uL3 family. In terms of assembly, part of the 50S ribosomal subunit. Forms a cluster with proteins L14 and L19. In terms of processing, methylated by PrmB.

In terms of biological role, one of the primary rRNA binding proteins, it binds directly near the 3'-end of the 23S rRNA, where it nucleates assembly of the 50S subunit. The polypeptide is Large ribosomal subunit protein uL3 (Shewanella frigidimarina (strain NCIMB 400)).